A 338-amino-acid chain; its full sequence is Holliday junction branch migration complex subunit RuvB (338 aa).

Residues 1–179 (MTDLTTPIRT…FGIPVRLNFY (179 aa)) are large ATPase domain (RuvB-L). Positions 18, 19, 60, 63, 64, 65, 169, 179, and 216 each coordinate ATP. T64 is a Mg(2+) binding site. The interval 180 to 250 (THAELEQVIG…AADAALNRLE (71 aa)) is small ATPAse domain (RuvB-S). The tract at residues 253–338 (ALGLDAMDRR…AGSQDGLFDK (86 aa)) is head domain (RuvB-H). Residues R289, R308, and R313 each contribute to the DNA site.

It belongs to the RuvB family. As to quaternary structure, homohexamer. Forms an RuvA(8)-RuvB(12)-Holliday junction (HJ) complex. HJ DNA is sandwiched between 2 RuvA tetramers; dsDNA enters through RuvA and exits via RuvB. An RuvB hexamer assembles on each DNA strand where it exits the tetramer. Each RuvB hexamer is contacted by two RuvA subunits (via domain III) on 2 adjacent RuvB subunits; this complex drives branch migration. In the full resolvosome a probable DNA-RuvA(4)-RuvB(12)-RuvC(2) complex forms which resolves the HJ.

The protein localises to the cytoplasm. It carries out the reaction ATP + H2O = ADP + phosphate + H(+). In terms of biological role, the RuvA-RuvB-RuvC complex processes Holliday junction (HJ) DNA during genetic recombination and DNA repair, while the RuvA-RuvB complex plays an important role in the rescue of blocked DNA replication forks via replication fork reversal (RFR). RuvA specifically binds to HJ cruciform DNA, conferring on it an open structure. The RuvB hexamer acts as an ATP-dependent pump, pulling dsDNA into and through the RuvAB complex. RuvB forms 2 homohexamers on either side of HJ DNA bound by 1 or 2 RuvA tetramers; 4 subunits per hexamer contact DNA at a time. Coordinated motions by a converter formed by DNA-disengaged RuvB subunits stimulates ATP hydrolysis and nucleotide exchange. Immobilization of the converter enables RuvB to convert the ATP-contained energy into a lever motion, pulling 2 nucleotides of DNA out of the RuvA tetramer per ATP hydrolyzed, thus driving DNA branch migration. The RuvB motors rotate together with the DNA substrate, which together with the progressing nucleotide cycle form the mechanistic basis for DNA recombination by continuous HJ branch migration. Branch migration allows RuvC to scan DNA until it finds its consensus sequence, where it cleaves and resolves cruciform DNA. The protein is Holliday junction branch migration complex subunit RuvB of Sphingopyxis alaskensis (strain DSM 13593 / LMG 18877 / RB2256) (Sphingomonas alaskensis).